The sequence spans 265 residues: Type-1Ba cytolytic delta-endotoxin (265 aa).

This sequence belongs to the cyt1/cyt2 endotoxin family. In terms of processing, active after proteolytic processing.

Kills the larvae of dipteran insects by making pores in the epithelial cell membrane of the insect midgut. This chain is Type-1Ba cytolytic delta-endotoxin (cyt1Ba1), found in Bacillus thuringiensis subsp. neoleoensis.